The following is a 590-amino-acid chain: Aspartate--tRNA(Asp/Asn) ligase (590 aa).

E176 contacts L-aspartate. Positions 200–203 (QLFK) are aspartate. R222 and H451 together coordinate L-aspartate. 222-224 (RDE) is a binding site for ATP. E485 provides a ligand contact to ATP. An L-aspartate-binding site is contributed by R492. 537–540 (GIDR) is a binding site for ATP.

It belongs to the class-II aminoacyl-tRNA synthetase family. Type 1 subfamily. As to quaternary structure, homodimer.

The protein resides in the cytoplasm. The catalysed reaction is tRNA(Asx) + L-aspartate + ATP = L-aspartyl-tRNA(Asx) + AMP + diphosphate. Its function is as follows. Aspartyl-tRNA synthetase with relaxed tRNA specificity since it is able to aspartylate not only its cognate tRNA(Asp) but also tRNA(Asn). Reaction proceeds in two steps: L-aspartate is first activated by ATP to form Asp-AMP and then transferred to the acceptor end of tRNA(Asp/Asn). In Ehrlichia chaffeensis (strain ATCC CRL-10679 / Arkansas), this protein is Aspartate--tRNA(Asp/Asn) ligase.